The following is a 158-amino-acid chain: Phosphopantetheine adenylyltransferase (158 aa).

Ser8 contacts substrate. ATP is bound by residues 8–9 (SF) and His16. 3 residues coordinate substrate: Lys40, Thr72, and Arg86. Residues 87–89 (GLR), Glu97, and 122–128 (HSFLSSS) each bind ATP.

It belongs to the bacterial CoaD family. Homohexamer. Mg(2+) serves as cofactor.

It is found in the cytoplasm. The catalysed reaction is (R)-4'-phosphopantetheine + ATP + H(+) = 3'-dephospho-CoA + diphosphate. Its pathway is cofactor biosynthesis; coenzyme A biosynthesis; CoA from (R)-pantothenate: step 4/5. Its function is as follows. Reversibly transfers an adenylyl group from ATP to 4'-phosphopantetheine, yielding dephospho-CoA (dPCoA) and pyrophosphate. The sequence is that of Phosphopantetheine adenylyltransferase from Prochlorococcus marinus (strain NATL2A).